We begin with the raw amino-acid sequence, 79 residues long: MENLNIDMLYIAAAIMMGLSAIGAAVGIGILGSKFLEGAARQPDLVPLLRTQFFIVMGLVDAIPMITVGLSLYVMFAVV.

2 helical membrane-spanning segments follow: residues 11–31 (IAAA…IGIL) and 53–73 (FFIV…LSLY).

It belongs to the ATPase C chain family. In terms of assembly, F-type ATPases have 2 components, F(1) - the catalytic core - and F(0) - the membrane proton channel. F(1) has five subunits: alpha(3), beta(3), gamma(1), delta(1), epsilon(1). F(0) has three main subunits: a(1), b(2) and c(10-14). The alpha and beta chains form an alternating ring which encloses part of the gamma chain. F(1) is attached to F(0) by a central stalk formed by the gamma and epsilon chains, while a peripheral stalk is formed by the delta and b chains.

The protein localises to the cell inner membrane. Functionally, f(1)F(0) ATP synthase produces ATP from ADP in the presence of a proton or sodium gradient. F-type ATPases consist of two structural domains, F(1) containing the extramembraneous catalytic core and F(0) containing the membrane proton channel, linked together by a central stalk and a peripheral stalk. During catalysis, ATP synthesis in the catalytic domain of F(1) is coupled via a rotary mechanism of the central stalk subunits to proton translocation. In terms of biological role, key component of the F(0) channel; it plays a direct role in translocation across the membrane. A homomeric c-ring of between 10-14 subunits forms the central stalk rotor element with the F(1) delta and epsilon subunits. This chain is ATP synthase subunit c, found in Blochmanniella floridana.